The sequence spans 336 residues: Eukaryotic translation initiation factor 3 subunit H (336 aa).

Residues 21-154 (VQCDGLAAMK…LKAYRLTPQA (134 aa)) enclose the MPN domain.

This sequence belongs to the eIF-3 subunit H family. Component of the eukaryotic translation initiation factor 3 (eIF-3) complex.

It is found in the cytoplasm. Functionally, component of the eukaryotic translation initiation factor 3 (eIF-3) complex, which is involved in protein synthesis of a specialized repertoire of mRNAs and, together with other initiation factors, stimulates binding of mRNA and methionyl-tRNAi to the 40S ribosome. The eIF-3 complex specifically targets and initiates translation of a subset of mRNAs involved in cell proliferation. The protein is Eukaryotic translation initiation factor 3 subunit H of Culex quinquefasciatus (Southern house mosquito).